Consider the following 111-residue polypeptide: MNAQALVLTDNAANKVRQLRDSEGNDDLMLRVYVTGGGCSGFSYGFNFAESVNEDDAEFVNGDVKMLVDSLSYQYLVGSVVDYVEGLEGSRFIVQNPNATTTCGCGSSFSI.

Positions 39, 103, and 105 each coordinate iron-sulfur cluster.

The protein belongs to the HesB/IscA family. As to quaternary structure, homodimer. It depends on iron-sulfur cluster as a cofactor.

In terms of biological role, required for insertion of 4Fe-4S clusters for at least IspG. This Acinetobacter baumannii (strain AB307-0294) protein is Iron-sulfur cluster insertion protein ErpA.